The primary structure comprises 340 residues: Glucokinase (340 aa).

17–22 (GDIGGT) contributes to the ATP binding site.

Belongs to the bacterial glucokinase family.

The protein localises to the cytoplasm. The enzyme catalyses D-glucose + ATP = D-glucose 6-phosphate + ADP + H(+). This chain is Glucokinase, found in Allorhizobium ampelinum (strain ATCC BAA-846 / DSM 112012 / S4) (Agrobacterium vitis (strain S4)).